The primary structure comprises 1024 residues: Myosin phosphatase Rho-interacting protein (1024 aa).

The interaction with F-actin stretch occupies residues 1–382; that stretch reads MSAAKENPCR…DRRSTESSMT (382 aa). One can recognise a PH 1 domain in the interval 43 to 150; the sequence is KPIYGGWLLL…WLEMLMVYPR (108 aa). The tract at residues 152 to 262 is disordered; that stretch reads NKQNQKKKRK…GDRVDGGRKV (111 aa). Residues 179–190 show a composition bias toward low complexity; sequence SSSGGSSGSSSS. Ser-193, Ser-219, Ser-221, Ser-225, and Ser-227 each carry phosphoserine. Low complexity predominate over residues 221–233; sequence SPAQSPSQSQPPA. Positions 240-262 are enriched in basic and acidic residues; the sequence is PGLESKEDESTISGDRVDGGRKV. Residues Ser-266, Ser-270, Ser-289, and Ser-292 each carry the phosphoserine modification. Disordered regions lie at residues 274-301 and 328-379; these read AKQD…SRRS and PSSD…STES. At Thr-295 the chain carries Phosphothreonine. Residues 333–349 show a composition bias toward basic and acidic residues; that stretch reads RQGRSERRAIPRKRDFA. Ser-364 carries the post-translational modification Phosphoserine. The PH 2 domain maps to 386–482; that stretch reads LNFKKGWLTK…WIQTIMKHVL (97 aa). The interval 486–583 is disordered; sequence APDVTSSLPE…AEPGELERER (98 aa). Residues 488–508 show a composition bias toward polar residues; the sequence is DVTSSLPEGKNKSTSFETCSR. Ser-492 is modified (phosphoserine). Residues 522–545 are compositionally biased toward basic and acidic residues; that stretch reads PEQKKSRARERRREGRSKTFDWAE. Positions 545–823 are interaction with RHOA; it reads EFRPIQQALA…SVQRELEVLS (279 aa). Ser-617 carries the post-translational modification Phosphoserine. A Phosphothreonine modification is found at Thr-645. Residues 672-976 are a coiled coil; that stretch reads HELTSLLEKE…AATEALGEKS (305 aa). Ser-799 bears the Phosphoserine mark. Residues 823-878 are interaction with PPP1R12A; it reads SEQYSQKCLENAHLAQALEAERQALRQCQRENQELNAHNQELNNRLAAEITRLRTL. A disordered region spans residues 972–995; it reads LGEKSPEGTTVSGYDIMKSKSNPD. Phosphoserine is present on residues Ser-976, Gly-979, Ser-992, Ser-1013, and Ser-1015.

Binds RHOA, PPP1R12A/MBS and PPP1R12C/MBS85 through adjacent coiled coil domains. Interacts with MYZAP. Binds F-actin through its N-terminus. Expressed in Kidney, Brain, Heart and Lung.

It localises to the cytoplasm. It is found in the cytoskeleton. In terms of biological role, targets myosin phosphatase to the actin cytoskeleton. Required for the regulation of the actin cytoskeleton by RhoA and ROCK1. Depletion leads to an increased number of stress fibers in smooth muscle cells through stabilization of actin fibers by phosphorylated myosin. Overexpression of MRIP as well as its F-actin-binding region leads to disassembly of stress fibers in neuronal cells. In Mus musculus (Mouse), this protein is Myosin phosphatase Rho-interacting protein (Mprip).